Consider the following 247-residue polypeptide: Probable transcriptional regulatory protein Gura_1416 (247 aa).

It belongs to the TACO1 family.

It is found in the cytoplasm. The chain is Probable transcriptional regulatory protein Gura_1416 from Geotalea uraniireducens (strain Rf4) (Geobacter uraniireducens).